The chain runs to 940 residues: Chordin (940 aa).

The N-terminal stretch at 1-19 (MMEGLLWILLSVIIASVHG) is a signal peptide. Residues 42 to 118 (SGCSFGGRFY…LPGHCCKTCP (77 aa)) form the VWFC 1 domain. 4 consecutive CHRD domains span residues 162–277 (TTTD…KHRA), 279–398 (FAET…GRRS), 404–519 (SVLS…LLPY), and 525–652 (RRNE…VPNH). 2 N-linked (GlcNAc...) asparagine glycosylation sites follow: Asn347 and Asn430. VWFC domains follow at residues 689–748 (HSCF…PICE), 767–836 (EGCY…KECP), and 855–919 (RLCK…PECI).

The protein belongs to the chordin family. As to quaternary structure, interacts with twsg1 and/or bmp4. In terms of processing, cleaved by tolloid proteases; cleavage participates in dorsoventral patterning during early development.

It is found in the secreted. Dorsalizing factor. Key developmental protein that dorsalizes early vertebrate embryonic tissues by binding to ventralizing TGF-beta family bone morphogenetic proteins (BMPs) and sequestering them in latent complexes. This Danio rerio (Zebrafish) protein is Chordin (chd).